Reading from the N-terminus, the 213-residue chain is Redox-sensing transcriptional repressor Rex (213 aa).

Positions 16 to 55 form a DNA-binding region, H-T-H motif; the sequence is IYYRYLRLLSNSGKNRVSSTELAEAVKVDSATIRRDFSYF. Residue 90–95 participates in NAD(+) binding; it reads GVGNLG.

It belongs to the transcriptional regulatory Rex family. As to quaternary structure, homodimer.

The protein resides in the cytoplasm. Functionally, modulates transcription in response to changes in cellular NADH/NAD(+) redox state. In Ligilactobacillus salivarius (strain UCC118) (Lactobacillus salivarius), this protein is Redox-sensing transcriptional repressor Rex.